Reading from the N-terminus, the 290-residue chain is Sodium/potassium-transporting ATPase subunit beta-2 (290 aa).

The Cytoplasmic segment spans residues 1 to 39 (MVIQKEKKSCGQVVEEWKEFVWNPRTHQFMGRTGTSWAF). A helical; Signal-anchor for type II membrane protein transmembrane segment spans residues 40 to 67 (ILLFYLVFYGFLTAMFTLTMWVMLQTVS). The Extracellular segment spans residues 68-290 (DHTPKYQDRL…VAFKLRINKT (223 aa)). Residues Asn96 and Asn118 are each glycosylated (N-linked (GlcNAc...) asparagine). Cysteines 129 and 150 form a disulfide. N-linked (GlcNAc...) asparagine glycosylation is present at Asn153. A disulfide bond links Cys160 and Cys177. Asn193, Asn197, and Asn238 each carry an N-linked (GlcNAc...) asparagine glycan. Positions 193–289 (NQSMNVTCVG…RVAFKLRINK (97 aa)) are immunoglobulin-like. An intrachain disulfide couples Cys200 to Cys261.

It belongs to the X(+)/potassium ATPases subunit beta family. The sodium/potassium-transporting ATPase is composed of a catalytic alpha subunit, an auxiliary non-catalytic beta subunit and an additional regulatory subunit. Interacts with BSG.

The protein localises to the cell membrane. Its function is as follows. This is the non-catalytic component of the active enzyme, which catalyzes the hydrolysis of ATP coupled with the exchange of Na(+) and K(+) ions across the plasma membrane. The exact function of the beta-2 subunit is not known. Mediates cell adhesion of neurons and astrocytes, and promotes neurite outgrowth. The chain is Sodium/potassium-transporting ATPase subunit beta-2 (ATP1B2) from Bos taurus (Bovine).